We begin with the raw amino-acid sequence, 202 residues long: Inner membrane-spanning protein YciB (202 aa).

Helical transmembrane passes span 47 to 67 (ILLA…WVHF), 75 to 95 (MLWV…AFQN), 101 to 121 (WKPT…AFIL), 146 to 166 (LSWI…AFNF), and 174 to 194 (FKLF…GMLL).

It belongs to the YciB family.

Its subcellular location is the cell inner membrane. Its function is as follows. Plays a role in cell envelope biogenesis, maintenance of cell envelope integrity and membrane homeostasis. This Dechloromonas aromatica (strain RCB) protein is Inner membrane-spanning protein YciB.